A 690-amino-acid chain; its full sequence is Eukaryotic translation initiation factor 3 subunit B (690 aa).

The interval 1 to 37 is disordered; that stretch reads MAKKKSEEQSSADANDSDYQEEPNFEDPPGFVDNISD. The span at 15-25 shows a compositional bias: acidic residues; sequence NDSDYQEEPNF. An RRM domain is found at 57 to 141; sequence SVVVVDNIPK…HTFAVNLFTD (85 aa). WD repeat units lie at residues 207-246, 293-331, 334-369, 442-484, and 530-575; these read TRERFTDTFVKWSPLGTYVVTFHKPGVAIWGGSSFQKIQK, DGMSVLSMFRWSHDDKFVARMGENSIHIYETPSFYLLDL, IKIPGIRGFSWSPTDNVIAYWVEEQNQIPARVTLME, EIRE…KPSL, and PDHF…IKRT. Positions 595–645 form a coiled coil; the sequence is EEKQKEIKKNLKKYYAAFEQKDRLRLTRASKELLEKRSQLRETFMEYRNKR.

This sequence belongs to the eIF-3 subunit B family. As to quaternary structure, component of the eukaryotic translation initiation factor 3 (eIF-3) complex. The eIF-3 complex interacts with pix. Interacts with mxt.

The protein resides in the cytoplasm. RNA-binding component of the eukaryotic translation initiation factor 3 (eIF-3) complex, which is involved in protein synthesis of a specialized repertoire of mRNAs and, together with other initiation factors, stimulates binding of mRNA and methionyl-tRNAi to the 40S ribosome. The eIF-3 complex specifically targets and initiates translation of a subset of mRNAs involved in cell proliferation. The protein is Eukaryotic translation initiation factor 3 subunit B of Drosophila sechellia (Fruit fly).